The chain runs to 944 residues: Protein unc-45 homolog A (944 aa).

Positions 1 to 25 (MTVSGPETPEPRPSDPGASSAEQLR) are disordered. TPR repeat units follow at residues 21-54 (AEQLRKEGNELFKCGDYEGALTAYTQALSLGATP), 58-91 (AILHRNRAACHLKLEDYSKAESEASKAIEKDGGD), and 92-125 (VKALYRRSQALEKLGRLDQAVLDLKRCVSLEPKN). Lys70 bears the N6-acetyllysine mark. Lys483 is modified (N6-acetyllysine).

Interacts with PGR isoforms A and B as well as with NR3C1 in the absence of ligand, and with HSP90AB1. Binding to HSP90AB1 involves 2 UNC45A monomers per HSP90AB1 dimer. As to expression, detected in spleen, bone marrow, lung and ovary, and at lower levels in testis, kidney, heart and brain (at protein level). Ubiquitous. Detected in uterus, large intestine, kidney, spleen, lung, brain, liver and ovary.

Its subcellular location is the cytoplasm. It localises to the perinuclear region. The protein resides in the nucleus. In terms of biological role, may act as co-chaperone for HSP90 (Potential). Prevents the stimulation of HSP90AB1 ATPase activity by AHSA1. Positive factor in promoting PGR function in the cell. May be necessary for proper folding of myosin (Potential). Necessary for normal cell proliferation. Necessary for normal myotube formation and myosin accumulation during muscle cell development. May play a role in erythropoiesis in stroma cells in the spleen. The chain is Protein unc-45 homolog A (Unc45a) from Mus musculus (Mouse).